The sequence spans 409 residues: Probable aspartate/prephenate aminotransferase (409 aa).

G39, W125, and N175 together coordinate L-aspartate. At K239 the chain carries N6-(pyridoxal phosphate)lysine. Residue R375 participates in L-aspartate binding.

Belongs to the class-I pyridoxal-phosphate-dependent aminotransferase family. Homodimer. The cofactor is pyridoxal 5'-phosphate.

It localises to the cytoplasm. It catalyses the reaction L-aspartate + 2-oxoglutarate = oxaloacetate + L-glutamate. The enzyme catalyses L-arogenate + 2-oxoglutarate = prephenate + L-glutamate. Its function is as follows. Catalyzes the reversible conversion of aspartate and 2-oxoglutarate to glutamate and oxaloacetate. Can also transaminate prephenate in the presence of glutamate. The chain is Probable aspartate/prephenate aminotransferase (aatA) from Rickettsia felis (strain ATCC VR-1525 / URRWXCal2) (Rickettsia azadi).